The chain runs to 1242 residues: Myosin-16 (1242 aa).

Residues 6–55 (MVDSHVWVEDPERAWIDGVVLNIKGEEAEIKTNDGRDVIANLSRLYPKDT) enclose the Myosin N-terminal SH3-like domain. Positions 60–729 (EGVEDMTRLS…QMAELDAHRT (670 aa)) constitute a Myosin motor domain. ATP contacts are provided by residues 154-161 (GESGSGKT) and 207-215 (NNNSSRFGK). Actin-binding regions lie at residues 493–527 (LIEKKPGGIIALLDEACMLPKSTPETFSEKLYHTF), 529–552 (DHKRFMKPKLTRSDFTLVHYAGDV), 587–610 (FPPLPKESSKSKFSSIGARFKLQL), and 610–632 (LQQLMETLNSTEPHYIRCVKPNN). IQ domains lie at 732-761 (LGESARMIQGQVRTRLTRERFVLMRRASVN), 755-784 (MRRASVNIQANWRGNIARKISKEMRREEAA), 780-809 (REEAAIKIQKNLRRQIAKKDYGKTKSSALT), 803-832 (TKSSALTLQSGVRTMAARHEFRYKLTTRAA), 828-857 (TTRAATVIQAYWRGYSAISDYKKLKRVSLL), and 851-880 (LKRVSLLCKSNLRGRIARKQLGQSKQADRK). 2 disordered regions span residues 869 to 893 (KQLGQSKQADRKEETEKERKVELSN) and 908 to 1042 (EQSD…ERKT). A compositionally biased stretch (basic and acidic residues) spans 876–893 (QADRKEETEKERKVELSN). 6 consecutive repeat copies span residues 876–908 (QADRKEETEKERKVELSNRAEEAVDMSFVLHSE), 909–940 (QSDDAESGHGRKAKLSIESEDGLDKSSVLHSE), 941–965 (QSDDEELGHERKTKLSIESEDGHSD), 966–997 (QSDDEEIEHERKTKHCIQAEDGIEKSYVMHSD), 998–1029 (QSDDEEIGHKRKTKHSIQAEDGIEKSFVVHSD), and 1030–1061 (QSDDEEIGHERKTKHAIQVEDGIQKSFVTCSE). Positions 876-1061 (QADRKEETEK…IQKSFVTCSE (186 aa)) are 6 X 33 AA repeats of Q-S-D-D-x-E-E-x(2)-H-x-R-K-x-K-x(2)-I-x(2)-E-D-G-x(3)-S-x-V-x-H-S-x. Residues 948–966 (GHERKTKLSIESEDGHSDQ) show a composition bias toward basic and acidic residues. A coiled-coil region spans residues 1079–1142 (DTEIESLTAE…QLQDSLNRLL (64 aa)). The interval 1175–1242 (DLADSSENSE…DKEGGFEDYF (68 aa)) is disordered. The segment covering 1179–1191 (SSENSEASSSDSD) has biased composition (low complexity). Residues 1199 to 1224 (PSSDNFSTFNPNQLQVIVQDLSTTEA) show a composition bias toward polar residues. The segment covering 1225–1242 (KGTESYDSDKEGGFEDYF) has biased composition (basic and acidic residues).

This sequence belongs to the TRAFAC class myosin-kinesin ATPase superfamily. Myosin family. Plant myosin class XI subfamily. Homodimer. Expressed in flowers and leaves.

Its subcellular location is the cytoplasm. Myosin heavy chain that is required for the cell cycle-regulated transport of various organelles and proteins for their segregation. Functions by binding with its tail domain to receptor proteins on organelles and exerting force with its N-terminal motor domain against actin filaments, thereby transporting its cargo along polarized actin cables. The chain is Myosin-16 (XI-J) from Arabidopsis thaliana (Mouse-ear cress).